Here is a 365-residue protein sequence, read N- to C-terminus: Methylthioribose-1-phosphate isomerase (365 aa).

Residue Asp-255 is the Proton donor of the active site.

Belongs to the eIF-2B alpha/beta/delta subunits family. MtnA subfamily.

The protein resides in the cytoplasm. Its subcellular location is the nucleus. It catalyses the reaction 5-(methylsulfanyl)-alpha-D-ribose 1-phosphate = 5-(methylsulfanyl)-D-ribulose 1-phosphate. The protein operates within amino-acid biosynthesis; L-methionine biosynthesis via salvage pathway; L-methionine from S-methyl-5-thio-alpha-D-ribose 1-phosphate: step 1/6. Catalyzes the interconversion of methylthioribose-1-phosphate (MTR-1-P) into methylthioribulose-1-phosphate (MTRu-1-P). The chain is Methylthioribose-1-phosphate isomerase from Drosophila willistoni (Fruit fly).